Consider the following 259-residue polypeptide: HTH-type quorum sensing-dependent transcriptional regulator VjbR (259 aa).

Residues 76 to 179 form a C12-HSL binding region; sequence KNYFAIDPVF…AGIIHGTVCG (104 aa). The region spanning 183–248 is the HTH luxR-type domain; that stretch reads ANSVASLLTP…SAVATALSLG (66 aa). The H-T-H motif DNA-binding region spans 207 to 226; that stretch reads DGEIAEILSIARWTVVTYLQ.

In terms of biological role, transcriptional regulator involved in the global control of Brucella gene expression. Mediates the effects of the quorum sensing autoinducer C12-HSL (N-dodecanoyl-homoserine lactone) on a large and diverse number of genes. The protein is HTH-type quorum sensing-dependent transcriptional regulator VjbR (vjbR) of Brucella suis biovar 1 (strain 1330).